The sequence spans 1186 residues: DNA excision repair protein ERCC-5 (1186 aa).

Residues 1–78 (MGVQGLWKLL…RIRPIFVFDG (78 aa)) form an N-domain region. N6-acetyllysine is present on lysine 8. Aspartate 30 is a Mg(2+) binding site. Residues 31 to 67 (ISIWLNQALKGVRDRHGNSIENPHLLTLFHRLCKLLF) form a DNA-binding; may bind to the undamaged single-strand DNA of the DNA repair bubble region. Aspartate 77 provides a ligand contact to Mg(2+). The spacer region stretch occupies residues 79–785 (DAPLLKKQTL…LRLFGIPYIQ (707 aa)). Disordered regions lie at residues 306 to 342 (ESLPSSSKMHGMSFDVKSSPCEKLKTEKEPDATPPSP), 354 to 385 (GSSSEEELESENRRQARGRNAPAAVDEGSISP), 404 to 473 (CAGD…SVPK), 510 to 533 (HSDAPGLPNGRELTPASPTCTNSV), and 667 to 724 (QAEF…AEDS). Residues 325 to 336 (PCEKLKTEKEPD) show a composition bias toward basic and acidic residues. A Phosphoserine modification is found at serine 384. The segment covering 454–472 (AEEHVASTNEGREPTDSVP) has biased composition (basic and acidic residues). Phosphoserine is present on serine 705. The tract at residues 786-881 (APMEAEAQCA…VTAMEILNEF (96 aa)) is I-domain. 4 residues coordinate Mg(2+): glutamate 789, glutamate 791, aspartate 810, and aspartate 812. Residues 820-836 (HVYRNFFNKNKFVEYYQ) form a DNA-binding; may bind to the undamaged single-strand DNA of the DNA repair bubble region. The DNA-binding; H2TH (helix-2turn-helix) motif which binds double-stranded DNA stretch occupies residues 848–880 (RNKLINLAYLLGSDYTEGIPTVGCVTAMEILNE). A Mg(2+)-binding site is contributed by aspartate 861. The segment at 912 to 918 (TKVKKKL) is DNA-binding; may bind double-stranded DNA. The interval 981-1009 (LKQLDAQQTQLRIDSFFRLAQQEKEDAKR) is interaction with PCNA. The segment at 1011 to 1186 (KSQRLNRAVT…RRARGRKRKT (176 aa)) is interaction with ERCC6/CSB. 2 disordered regions span residues 1056–1081 (QKRGITNTLEESSSLKRKRLSDSKGK) and 1095–1186 (ESSD…KRKT). A Nuclear localization signal 1 motif is present at residues 1057-1074 (KRGITNTLEESSSLKRKR). Over residues 1124-1133 (TSASDSQNSV) the composition is skewed to polar residues. The Nuclear localization signal 2 signature appears at 1169-1186 (FGKKRRKLRRARGRKRKT). Positions 1169-1186 (FGKKRRKLRRARGRKRKT) are enriched in basic residues.

Belongs to the XPG/RAD2 endonuclease family. XPG subfamily. Monomer. Homodimer. Component of the homologous recombination repair (HR) complex composed of ERCC5/XPG, BRCA2, PALB2, DSS1 and RAD51. Within the complex, interacts with BRCA2 and PALB2. Interacts with RNA polymerase II. Interacts (via C-terminus) with ERCC6/CSB; the interaction stimulates ERCC6/CSB binding to the DNA repair bubble and ERCC6/CSB ATPase activity. May form a complex composed of RNA polymerase II, ERCC6/CSB and ERCC5/XPG which associates with the DNA repair bubble during transcription-coupled nucleotide excision repair. Interacts with BRCA1; the interaction promotes the release of BRCA1 from DNA. Interacts with PCNA. Interacts with NTHL1; the interaction stimulates NTHL1 activity and NTHL1 binding to its DNA substrate. The cofactor is Mg(2+).

It localises to the nucleus. It is found in the chromosome. Single-stranded structure-specific DNA endonuclease involved in DNA excision repair. Makes the 3'incision in DNA nucleotide excision repair (NER). Binds and bends DNA repair bubble substrate and breaks base stacking at the single-strand/double-strand DNA junction of the DNA bubble. Plays a role in base excision repair (BER) by promoting the binding of DNA glycosylase NTHL1 to its substrate and increasing NTHL1 catalytic activity that removes oxidized pyrimidines from DNA. Involved in transcription-coupled nucleotide excision repair (TCR) which allows RNA polymerase II-blocking lesions to be rapidly removed from the transcribed strand of active genes. Functions during the initial step of TCR in cooperation with ERCC6/CSB to recognized stalled RNA polymerase II. Also, stimulates ERCC6/CSB binding to the DNA repair bubble and ERCC6/CSB ATPase activity. Required for DNA replication fork maintenance and preservation of genomic stability. Involved in homologous recombination repair (HRR) induced by DNA replication stress by recruiting RAD51, BRCA2, and PALB2 to the damaged DNA site. In TFIIH stimulates the 5'-3' helicase activity of XPD/ERCC2 and the DNA translocase activity of XPB/ERCC3. During HRR, binds to the replication fork with high specificity and stabilizes it. Also, acts upstream of HRR, to promote the release of BRCA1 from DNA. This Homo sapiens (Human) protein is DNA excision repair protein ERCC-5 (ERCC5).